A 155-amino-acid polypeptide reads, in one-letter code: Methylated-DNA--protein-cysteine methyltransferase (155 aa).

Cysteine 119 serves as the catalytic Nucleophile; methyl group acceptor.

It belongs to the MGMT family.

The protein localises to the cytoplasm. The enzyme catalyses a 6-O-methyl-2'-deoxyguanosine in DNA + L-cysteinyl-[protein] = S-methyl-L-cysteinyl-[protein] + a 2'-deoxyguanosine in DNA. The catalysed reaction is a 4-O-methyl-thymidine in DNA + L-cysteinyl-[protein] = a thymidine in DNA + S-methyl-L-cysteinyl-[protein]. In terms of biological role, involved in the cellular defense against the biological effects of O6-methylguanine (O6-MeG) and O4-methylthymine (O4-MeT) in DNA. Repairs the methylated nucleobase in DNA by stoichiometrically transferring the methyl group to a cysteine residue in the enzyme. This is a suicide reaction: the enzyme is irreversibly inactivated. In Sulfolobus acidocaldarius (strain ATCC 33909 / DSM 639 / JCM 8929 / NBRC 15157 / NCIMB 11770), this protein is Methylated-DNA--protein-cysteine methyltransferase.